Consider the following 469-residue polypeptide: ATP-dependent protease ATPase subunit HslU (469 aa).

ATP contacts are provided by residues I21, 63–68 (GVGKTE), D282, E347, and R419.

It belongs to the ClpX chaperone family. HslU subfamily. A double ring-shaped homohexamer of HslV is capped on each side by a ring-shaped HslU homohexamer. The assembly of the HslU/HslV complex is dependent on binding of ATP.

The protein localises to the cytoplasm. Its function is as follows. ATPase subunit of a proteasome-like degradation complex; this subunit has chaperone activity. The binding of ATP and its subsequent hydrolysis by HslU are essential for unfolding of protein substrates subsequently hydrolyzed by HslV. HslU recognizes the N-terminal part of its protein substrates and unfolds these before they are guided to HslV for hydrolysis. This Petrotoga mobilis (strain DSM 10674 / SJ95) protein is ATP-dependent protease ATPase subunit HslU.